The chain runs to 392 residues: 8-amino-7-oxononanoate synthase 1 (392 aa).

109–110 contacts pyridoxal 5'-phosphate; sequence GF. Histidine 134 serves as a coordination point for substrate. Residues serine 181, 206–209, and 237–240 contribute to the pyridoxal 5'-phosphate site; these read DDAH and TLSK. Residue lysine 240 is modified to N6-(pyridoxal phosphate)lysine. Threonine 354 lines the substrate pocket.

This sequence belongs to the class-II pyridoxal-phosphate-dependent aminotransferase family. BioF subfamily. As to quaternary structure, homodimer. Pyridoxal 5'-phosphate is required as a cofactor.

It carries out the reaction 6-carboxyhexanoyl-[ACP] + L-alanine + H(+) = (8S)-8-amino-7-oxononanoate + holo-[ACP] + CO2. It functions in the pathway cofactor biosynthesis; biotin biosynthesis. Catalyzes the decarboxylative condensation of pimeloyl-[acyl-carrier protein] and L-alanine to produce 8-amino-7-oxononanoate (AON), [acyl-carrier protein], and carbon dioxide. The chain is 8-amino-7-oxononanoate synthase 1 (kbl) from Bacillus subtilis (strain 168).